The sequence spans 448 residues: Histidinol dehydrogenase (448 aa).

NAD(+) is bound by residues Tyr-136, Gln-197, and Asn-220. The substrate site is built by Ser-243, Gln-265, and His-268. Zn(2+)-binding residues include Gln-265 and His-268. Catalysis depends on proton acceptor residues Glu-333 and His-334. Residues His-334, Asp-367, Glu-421, and His-426 each contribute to the substrate site. Asp-367 contributes to the Zn(2+) binding site. Residue His-426 participates in Zn(2+) binding.

Belongs to the histidinol dehydrogenase family. The cofactor is Zn(2+).

The enzyme catalyses L-histidinol + 2 NAD(+) + H2O = L-histidine + 2 NADH + 3 H(+). The protein operates within amino-acid biosynthesis; L-histidine biosynthesis; L-histidine from 5-phospho-alpha-D-ribose 1-diphosphate: step 9/9. In terms of biological role, catalyzes the sequential NAD-dependent oxidations of L-histidinol to L-histidinaldehyde and then to L-histidine. The sequence is that of Histidinol dehydrogenase from Pseudomonas syringae pv. syringae (strain B728a).